A 1092-amino-acid polypeptide reads, in one-letter code: Electroneutral sodium bicarbonate exchanger 1 (1092 aa).

Disordered regions lie at residues 1-26 (MPAGSNEPDGVLSYQRPDEEAVVDQG), 55-95 (LGRQ…HDTP), and 243-263 (KKQSDPHSMDRDGQTVSPQSA). The Extracellular portion of the chain corresponds to 1–478 (MPAGSNEPDG…DYRDALSLQC (478 aa)). Residues 58 to 76 (QSHRHHRTHGQKHRRRGGR) are compositionally biased toward basic residues. The span at 243–255 (KKQSDPHSMDRDG) shows a compositional bias: basic and acidic residues. The chain crosses the membrane as a helical span at residues 479-499 (LASFLFLYCACMSPVITFGGL). Residues 500–507 (LGEATEGR) lie on the Cytoplasmic side of the membrane. A helical transmembrane segment spans residues 508–528 (ISAIESLFGASMTGIAYSLFA). The Extracellular portion of the chain corresponds to 529-565 (GQPLTILGSTGPVLVFEKILFKFCKDYALSYLSLRAC). Residues 566–586 (IGLWTAFLCIVLVATDASSLV) traverse the membrane as a helical segment. The Cytoplasmic portion of the chain corresponds to 587 to 595 (CYITRFTEE). The chain crosses the membrane as a helical span at residues 596 to 616 (AFASLICIIFIYEAIEKLIHL). Over 617-687 (AETYPIHMHS…EFIGSACGHH (71 aa)) the chain is Extracellular. Cystine bridges form between cysteine 636-cysteine 684 and cysteine 638-cysteine 672. 2 N-linked (GlcNAc) asparagine glycosylation sites follow: asparagine 646 and asparagine 666. Residues 688 to 708 (GPYTPDVLFWSCILFFATFIV) form a helical membrane-spanning segment. The Cytoplasmic portion of the chain corresponds to 709-731 (SSTLKTFKTSRYFPTRVRSTVSD). The helical transmembrane segment at 732-752 (FAVFLTIFTMVILDFLIGVPS) threads the bilayer. Residues 753 to 778 (PKLQVPSVFKPTRDDRGWFISPIGPN) are Extracellular-facing. A helical transmembrane segment spans residues 779–799 (PWWTVIAAIIPALLCTILIFM). Topologically, residues 800-824 (DQQITAVIINRKEHKLKKGCGYHLD) are cytoplasmic. Residues 825-845 (LLVVAIMLGVCSLMGLPWFVA) form a helical membrane-spanning segment. Over 846–881 (ATVLSITHVNSLKLESECSAPGEQPKFLGIREQRVT) the chain is Extracellular. A helical membrane pass occupies residues 882–902 (GLMIFVLMGCSVFMTAVLKFI). At 903 to 904 (PM) the chain is on the cytoplasmic side. Residues 905–925 (PVLYGVFLYMGVSSLQGIQFF) form a helical membrane-spanning segment. The Extracellular portion of the chain corresponds to 926-962 (DRLKLFGMPAKHQPDFIYLRHVPLRKVHLFTLVQLTC). Residues 963 to 983 (LVLLWVIKASPAAIVFPMMVL) form a helical membrane-spanning segment. At 984–1092 (ALVFVRKVMD…GNTKEKSPFN (109 aa)) the chain is on the cytoplasmic side.

The protein belongs to the anion exchanger (TC 2.A.31) family. As to quaternary structure, homodimer. As to expression, expressed in the Purkinje cells and dendrites in the molecular layer of the cerebellum (at protein level). Expressed in the hippocampal neurons (at protein level). Strong expression observed in testis and moderate expression in kidney inner medulla, the submandibular gland, eye, cerebrum and cerebellum.

The protein localises to the cell membrane. The protein resides in the apical cell membrane. Its subcellular location is the basolateral cell membrane. It is found in the cytoplasmic vesicle. It localises to the secretory vesicle. The protein localises to the synaptic vesicle membrane. The enzyme catalyses 2 hydrogencarbonate(out) + chloride(in) + Na(+)(out) = 2 hydrogencarbonate(in) + chloride(out) + Na(+)(in). In terms of biological role, mediates electroneutral sodium- and carbonate-dependent chloride-HCO3(-) exchange with a Na(+):HCO3(-) stoichiometry of 2:1. Plays a major role in pH regulation in neurons. Mediates sodium reabsorption in the renal cortical collecting ducts. This is Electroneutral sodium bicarbonate exchanger 1 from Rattus norvegicus (Rat).